The sequence spans 285 residues: Probable endonuclease 4 (285 aa).

9 residues coordinate Zn(2+): histidine 69, histidine 109, glutamate 145, aspartate 179, histidine 182, histidine 216, aspartate 229, histidine 231, and glutamate 261.

It belongs to the AP endonuclease 2 family. It depends on Zn(2+) as a cofactor.

The catalysed reaction is Endonucleolytic cleavage to 5'-phosphooligonucleotide end-products.. Functionally, endonuclease IV plays a role in DNA repair. It cleaves phosphodiester bonds at apurinic or apyrimidinic (AP) sites, generating a 3'-hydroxyl group and a 5'-terminal sugar phosphate. In Escherichia coli O127:H6 (strain E2348/69 / EPEC), this protein is Probable endonuclease 4.